The following is a 588-amino-acid chain: Phomenoic acid biosynthesis cluster cytochrome P450 monooxygenase (588 aa).

A signal peptide spans 1 to 21 (MSFARIFITILLLFILRRAFK). Asn-293 carries an N-linked (GlcNAc...) asparagine glycan. Positions 467–486 (HQSDPDRFKPSPDAPDEKLF) are enriched in basic and acidic residues. The tract at residues 467–490 (HQSDPDRFKPSPDAPDEKLFRPSR) is disordered. Residue Cys-519 participates in heme binding.

This sequence belongs to the cytochrome P450 family. Heme is required as a cofactor.

The protein operates within secondary metabolite biosynthesis. In terms of biological role, cytochrome P450 monooxygenase; part of the gene cluster that mediates the biosynthesis of phomenoic acid, a long chain aliphatic carboxylic acid that does not appear to be essential for pathogenicity but may play a role in allowing to outcompete other fungi in the environmental niche via its antifungal properties. The polyketide synthase produces the long methylated aliphatic carboxylic acid chain of phomenoic acid. The cluster-specific cytochrome P450 monooxygenase may then hydroxylate the methyl group of carbon 31. The putative dehydrogenase YogA, which has no obvious role in phomenoic acid biosynthesis, may further modify phomenoic acid to produce a compound not identified yet. The polypeptide is Phomenoic acid biosynthesis cluster cytochrome P450 monooxygenase (Leptosphaeria maculans (strain JN3 / isolate v23.1.3 / race Av1-4-5-6-7-8) (Blackleg fungus)).